Here is a 508-residue protein sequence, read N- to C-terminus: Lysine--tRNA ligase (508 aa).

Mg(2+) contacts are provided by Glu418 and Glu425.

It belongs to the class-II aminoacyl-tRNA synthetase family. As to quaternary structure, homodimer. It depends on Mg(2+) as a cofactor.

The protein localises to the cytoplasm. The enzyme catalyses tRNA(Lys) + L-lysine + ATP = L-lysyl-tRNA(Lys) + AMP + diphosphate. The chain is Lysine--tRNA ligase from Burkholderia pseudomallei (strain 668).